The chain runs to 187 residues: Apolipophorin-3 (187 aa).

The N-terminal stretch at 1 to 17 (MAAKFIILLALFALSQA) is a signal peptide. The propeptide occupies 18–22 (SVVRR).

The protein belongs to the insect apolipophorin-3 family. As to quaternary structure, equilibrium between a soluble monomer and a bound lipoprotein form. Apolipophorin-3 associates with lipophorin during lipid loading until each particle contains 9 or 14 molecules of apolipophorin-3. Hemolymph.

It localises to the secreted. Its function is as follows. Assists in the loading of diacylglycerol, generated from triacylglycerol stores in the fat body through the action of adipokinetic hormone, into lipophorin, the hemolymph lipoprotein. It increases the lipid carrying capacity of lipophorin by covering the expanding hydrophobic surface resulting from diacylglycerol uptake. It thus plays a critical role in the transport of lipids during flight in several species of insects. The polypeptide is Apolipophorin-3 (Hyphantria cunea (Fall webworm moth)).